A 190-amino-acid chain; its full sequence is Large ribosomal subunit protein bL9 (190 aa).

The protein belongs to the bacterial ribosomal protein bL9 family.

Functionally, binds to the 23S rRNA. The protein is Large ribosomal subunit protein bL9 of Methylorubrum extorquens (strain CM4 / NCIMB 13688) (Methylobacterium extorquens).